We begin with the raw amino-acid sequence, 102 residues long: Large ribosomal subunit protein uL24c (102 aa).

It belongs to the universal ribosomal protein uL24 family. As to quaternary structure, part of the 50S ribosomal subunit.

The protein localises to the plastid. It localises to the chloroplast. In terms of biological role, one of two assembly initiator proteins, it binds directly to the 5'-end of the 23S rRNA, where it nucleates assembly of the 50S subunit. This is Large ribosomal subunit protein uL24c (rpl24) from Rhodomonas salina (Cryptomonas salina).